The primary structure comprises 503 residues: Diels-Alderase cghA (503 aa).

It belongs to the Diels-Alderase family.

It carries out the reaction (2S)-3-[(2S)-3,5-dioxo-4-[(2E,4R,6R,8E,10E,12E)-4,6,12-trimethyltetradeca-2,8,10,12-tetraenoyl]pyrrolidin-2-yl]-2-hydroxy-2-methylpropanoate = sch 210972. It functions in the pathway secondary metabolite biosynthesis. Diels-Alderase; part of the gene cluster that mediates the biosynthesis of the tetramic acid Sch210972, a potential anti-HIV fungal natural product that contains a decalin core. The PKS module of cghG together with the enoylreductase cghC catalyze the formation of the polyketide unit which is then conjugated to 4-hydroxyl-4-methyl glutamate (HMG) by the condensation domain of the cghG NRPS module. One unique structural feature of Sch210972 is the tetramic acid motif proposed to be derived from the non-proteinogenic amino acid HMG, by a Dieckmann-type condensation catalyzed by the reductase domain of cghG. The aldolase cghB catalyzes the aldol condensation of 2 molecules of pyruvic acid to yield the intermediate 4-hydroxyl-4-methyl-2-oxoglutarate (HMOG), which can then be stereoselectively transaminated by an unidentified enzyme to form HMG. The Diels-Alderase cghA then uses the Dieckmann product released by cghG as substrate and catalyzes the Diels-Alder cycloaddition to form the decalin ring of Sch210972. CghA also suppresses the nonenzymatic formation of the alternative stereoisomer. The chain is Diels-Alderase cghA from Chaetomium globosum (strain ATCC 6205 / CBS 148.51 / DSM 1962 / NBRC 6347 / NRRL 1970) (Soil fungus).